The sequence spans 297 residues: Phosphoribosylaminoimidazole-succinocarboxamide synthase (297 aa).

Belongs to the SAICAR synthetase family.

It catalyses the reaction 5-amino-1-(5-phospho-D-ribosyl)imidazole-4-carboxylate + L-aspartate + ATP = (2S)-2-[5-amino-1-(5-phospho-beta-D-ribosyl)imidazole-4-carboxamido]succinate + ADP + phosphate + 2 H(+). The protein operates within purine metabolism; IMP biosynthesis via de novo pathway; 5-amino-1-(5-phospho-D-ribosyl)imidazole-4-carboxamide from 5-amino-1-(5-phospho-D-ribosyl)imidazole-4-carboxylate: step 1/2. This chain is Phosphoribosylaminoimidazole-succinocarboxamide synthase, found in Methylobacillus flagellatus (strain ATCC 51484 / DSM 6875 / VKM B-1610 / KT).